Consider the following 64-residue polypeptide: MAVPKRKVSKSRRDSRRAQTFRLEAPNLSPCPNCRTPRLPHRVCPNCGYYQGRVVIQHEAEAAE.

Over residues 1 to 15 (MAVPKRKVSKSRRDS) the composition is skewed to basic residues. Residues 1-21 (MAVPKRKVSKSRRDSRRAQTF) are disordered.

It belongs to the bacterial ribosomal protein bL32 family.

In Symbiobacterium thermophilum (strain DSM 24528 / JCM 14929 / IAM 14863 / T), this protein is Large ribosomal subunit protein bL32.